Reading from the N-terminus, the 497-residue chain is MAAAGGAVLLLVLATATSVTGQHDYSDALHKSILFFEGQRSGRLPPDQRLRWRRDSALNDGATAGVDLTGGYYDAGDNVKFGFPMAFTATLMSWGLIDFGRSFGAHAAEAREAVRWATDYLMKATATPNTVYVQVGDAFRDHSCWERPEDMDTPRTVYKVDPSHPGSDVAAETAAALAAASIVFRDADPDYSNRLLDRAIQVFEFADKYRGPYSSSLHAAVCPCYCDYSGYKDELLWGAAWLHKASRRREYRDYIKRNEVVLGASEAINEFGWDNKHAGINVLISKEVLMGKDEYFQSFRVNADNFICTLLPGISNHPQIQYSPGGLLFKVGNSNMQHVTSLSFLLLAYSNYLSHANVRVPCGTSSASPVQLRRVAKRQVDYILGDNPLRMSYMVGYGSRYPLRIHHRGSSLPSVAAHPAQIGCKAGATYYASAAPNPNLLVGAVVGGPSNTSDAFPDARAVFQQSEPTTYINAPLLGLLAYFSAHPNLAQSDLLYD.

An N-terminal signal peptide occupies residues 1 to 21; sequence MAAAGGAVLLLVLATATSVTG. Aspartate 77 (nucleophile) is an active-site residue. Residue histidine 406 is part of the active site. N-linked (GlcNAc...) asparagine glycosylation is present at asparagine 451. Residues aspartate 458 and glutamate 467 contribute to the active site.

The protein belongs to the glycosyl hydrolase 9 (cellulase E) family.

The protein resides in the secreted. It catalyses the reaction Endohydrolysis of (1-&gt;4)-beta-D-glucosidic linkages in cellulose, lichenin and cereal beta-D-glucans.. The polypeptide is Endoglucanase 17 (GLU13) (Oryza sativa subsp. japonica (Rice)).